A 364-amino-acid chain; its full sequence is Mannose-1-phosphate guanylyltransferase catalytic subunit beta (364 aa).

Residues lysine 2–proline 220 form a substrate-binding domain region. Aspartate 109 contacts GDP-alpha-D-mannose. Residue aspartate 109 coordinates Mg(2+). The active site involves lysine 160. Aspartate 216 is a binding site for GDP-alpha-D-mannose. Mg(2+) is bound at residue aspartate 216. The hexapeptide repeat domain stretch occupies residues alanine 243–methionine 364.

The protein belongs to the transferase hexapeptide repeat family. As to quaternary structure, component of the GMPPA-GMPPB mannose-1-phosphate guanylyltransferase complex composed of 4 GMPPA subunits and 8 tag-335/GMPPB subunits; the complex is organized into three layers, a central layer made up of 2 GMPPA dimers sandwiched between two layers each made up of 2 tag-335/GMPPB dimers. Catalytic activity of tag-335/GMPPB is reduced when part of the complex and binding of GDP-alpha-D-Mannose by GMPPA induces allosteric feedback inhibition of tag-335/GMPPB. Requires Mg(2+) as cofactor.

It catalyses the reaction alpha-D-mannose 1-phosphate + GTP + H(+) = GDP-alpha-D-mannose + diphosphate. It participates in nucleotide-sugar biosynthesis; GDP-alpha-D-mannose biosynthesis; GDP-alpha-D-mannose from alpha-D-mannose 1-phosphate (GTP route): step 1/1. Enzyme activity is reduced by incorporation into the GMPPA-GMPPB mannose-1-phosphate guanylyltransferase complex. Allosterically inhibited, when part of the GMPPA-GMPPB complex, by GDP-alpha-D-mannose binding to GMPPA. Functionally, catalytic subunit of the GMPPA-GMPPB mannose-1-phosphate guanylyltransferase complex. Catalyzes the formation of GDP-mannose, an essential precursor of glycan moieties of glycoproteins and glycolipids. Can catalyze the reverse reaction in vitro. Together with GMPPA regulates GDP-alpha-D-mannose levels. This Caenorhabditis briggsae protein is Mannose-1-phosphate guanylyltransferase catalytic subunit beta.